The following is a 541-amino-acid chain: Arginine--tRNA ligase (541 aa).

The 'HIGH' region signature appears at 119 to 129; sequence ANPTGPLHIGH.

The protein belongs to the class-I aminoacyl-tRNA synthetase family. In terms of assembly, monomer.

The protein resides in the cytoplasm. It catalyses the reaction tRNA(Arg) + L-arginine + ATP = L-arginyl-tRNA(Arg) + AMP + diphosphate. In Helicobacter pylori (strain G27), this protein is Arginine--tRNA ligase.